The following is a 455-amino-acid chain: MNRNTSSLWADCLLQLQDQVPADKFQMWLRPLQADISSPNQLTIYVQNFFSRQWVENNYLADITKLARQLTGNPDFVVKLVEGVKPAPKQNNIVTTKQNAETAVDSEQHLQSVEFKTGLNSNHLFENFVEGKSNQLARAVGIKVANNPGDKTANPLFLYGGTGLGKTHLLHAVGNGILANNPKARVLYIHAERFVQEYVKATKLGAAENFKKFYRNLDALLIDDIQFFAGKELTQEEFFNTFNNLFEGEKQIILTSDRYPREIEKIEDRLKSRFSWGLSVAIEPPELETRVAILMKKAEERGVNLAEEVAFFIGQKLRTHVRELEGALNRVIANAEFTGKTITIDFVRDTLKDMLALQDKLVTIDNIQKVVAEYYRIKVSDLNSKNRSRSVARPRQLAMALAKELTNRSFPEIGKNFGGKDHTTVIYACDKIQELRETDSSIQEDWSNLIRTLSA.

Positions 1 to 82 are domain I, interacts with DnaA modulators; sequence MNRNTSSLWA…NPDFVVKLVE (82 aa). Positions 82 to 117 are domain II; the sequence is EGVKPAPKQNNIVTTKQNAETAVDSEQHLQSVEFKT. The domain III, AAA+ region stretch occupies residues 118–335; the sequence is GLNSNHLFEN…GALNRVIANA (218 aa). ATP-binding residues include G163, G165, K166, and T167. The segment at 336-455 is domain IV, binds dsDNA; that stretch reads EFTGKTITID…WSNLIRTLSA (120 aa).

The protein belongs to the DnaA family. In terms of assembly, oligomerizes as a right-handed, spiral filament on DNA at oriC.

Its subcellular location is the cytoplasm. In terms of biological role, plays an essential role in the initiation and regulation of chromosomal replication. ATP-DnaA binds to the origin of replication (oriC) to initiate formation of the DNA replication initiation complex once per cell cycle. Binds the DnaA box (a 9 base pair repeat at the origin) and separates the double-stranded (ds)DNA. Forms a right-handed helical filament on oriC DNA; dsDNA binds to the exterior of the filament while single-stranded (ss)DNA is stabiized in the filament's interior. The ATP-DnaA-oriC complex binds and stabilizes one strand of the AT-rich DNA unwinding element (DUE), permitting loading of DNA polymerase. After initiation quickly degrades to an ADP-DnaA complex that is not apt for DNA replication. Binds acidic phospholipids. The sequence is that of Chromosomal replication initiator protein DnaA from Actinobacillus succinogenes (strain ATCC 55618 / DSM 22257 / CCUG 43843 / 130Z).